Here is a 262-residue protein sequence, read N- to C-terminus: 14-3-3 protein homolog (262 aa).

It belongs to the 14-3-3 family.

This is 14-3-3 protein homolog from Trichoderma harzianum (Hypocrea lixii).